The chain runs to 60 residues: Small ribosomal subunit protein bS21 (60 aa).

The protein belongs to the bacterial ribosomal protein bS21 family.

This Mycoplasma pneumoniae (strain ATCC 29342 / M129 / Subtype 1) (Mycoplasmoides pneumoniae) protein is Small ribosomal subunit protein bS21 (rpsU).